We begin with the raw amino-acid sequence, 259 residues long: Phosphonates import ATP-binding protein PhnC (259 aa).

An ABC transporter domain is found at 4–245; the sequence is ISIQSVTKRF…ALRTIYQREG (242 aa). 37–44 provides a ligand contact to ATP; the sequence is GPSGAGKS.

Belongs to the ABC transporter superfamily. Phosphonates importer (TC 3.A.1.9.1) family. The complex is composed of two ATP-binding proteins (PhnC), two transmembrane proteins (PhnE) and a solute-binding protein (PhnD).

The protein localises to the cell inner membrane. The enzyme catalyses phosphonate(out) + ATP + H2O = phosphonate(in) + ADP + phosphate + H(+). In terms of biological role, part of the ABC transporter complex PhnCDE involved in phosphonates import. Responsible for energy coupling to the transport system. In Thiobacillus denitrificans (strain ATCC 25259 / T1), this protein is Phosphonates import ATP-binding protein PhnC.